The following is a 683-amino-acid chain: Translation factor guf1, mitochondrial (683 aa).

The transit peptide at 1–43 directs the protein to the mitochondrion; it reads MRGCLQLARWLSAAPKGTAASLTRAPFVLANAPRFFTSSASHA. The 185-residue stretch at 66–250 folds into the tr-type G domain; that stretch reads ERYRNFCIVA…KIPAYGYFPV (185 aa). Residues 75–82, 139–143, and 193–196 contribute to the GTP site; these read AHVDHGKS, DTPGH, and NKVD.

This sequence belongs to the TRAFAC class translation factor GTPase superfamily. Classic translation factor GTPase family. LepA subfamily.

It localises to the mitochondrion inner membrane. It catalyses the reaction GTP + H2O = GDP + phosphate + H(+). In terms of biological role, promotes mitochondrial protein synthesis. May act as a fidelity factor of the translation reaction, by catalyzing a one-codon backward translocation of tRNAs on improperly translocated ribosomes. Binds to mitochondrial ribosomes in a GTP-dependent manner. This chain is Translation factor guf1, mitochondrial (guf1), found in Neosartorya fischeri (strain ATCC 1020 / DSM 3700 / CBS 544.65 / FGSC A1164 / JCM 1740 / NRRL 181 / WB 181) (Aspergillus fischerianus).